The chain runs to 503 residues: Anhydrotetracycline monooxygenase (503 aa).

Belongs to the PheA/TfdB FAD monooxygenase family. It depends on FAD as a cofactor.

It carries out the reaction anhydrotetracycline + NADPH + O2 + H(+) = 5a,11a-dehydrotetracycline + NADP(+) + H2O. It functions in the pathway antibiotic biosynthesis; oxytetracycline biosynthesis. In terms of biological role, catalyzes hydroxylation of the anthracycline structure at position C-6 during the biosynthesis of oxytetracyline. In Streptomyces rimosus, this protein is Anhydrotetracycline monooxygenase.